The sequence spans 262 residues: GTP cyclohydrolase FolE2 (262 aa).

Belongs to the GTP cyclohydrolase IV family.

The enzyme catalyses GTP + H2O = 7,8-dihydroneopterin 3'-triphosphate + formate + H(+). Its pathway is cofactor biosynthesis; 7,8-dihydroneopterin triphosphate biosynthesis; 7,8-dihydroneopterin triphosphate from GTP: step 1/1. Converts GTP to 7,8-dihydroneopterin triphosphate. The chain is GTP cyclohydrolase FolE2 from Dichelobacter nodosus (strain VCS1703A).